Here is a 411-residue protein sequence, read N- to C-terminus: Protein BTN1 (411 aa).

An N-terminal signal peptide occupies residues 1–29 (MNSKQRVYAFFWIFGLVNNVLYVVILSAA). 8 helical membrane-spanning segments follow: residues 41–61 (LVLLMDITPSLLIKVTAPFFI), 79–99 (IGMIFVSGKSLLLCMIGIAMA), 127–147 (SGTGGAGIVGSSVYMLLTSIF), 149–169 (LPIRLSLLSFTILPFAFLLYF), 281–300 (YVTYGTLYQLGVFISRSLAH), 307–329 (LYFLSALQGLNLVLTILQAWIYI), 334–356 (WPIMILIFYEGLLGGSSYVNTFL), and 371–391 (LGAVSIADSLGVFIAALVGLG).

The protein belongs to the battenin family.

It is found in the vacuole membrane. In terms of biological role, involved in vacuolar transport and vacuole pH homeostasis. Also required for cytokinesis. This chain is Protein BTN1 (BTN1), found in Candida glabrata (strain ATCC 2001 / BCRC 20586 / JCM 3761 / NBRC 0622 / NRRL Y-65 / CBS 138) (Yeast).